Reading from the N-terminus, the 411-residue chain is Multifunctional CCA protein (411 aa).

2 residues coordinate ATP: G8 and R11. CTP contacts are provided by G8 and R11. Mg(2+) contacts are provided by E21 and D23. ATP is bound by residues R91, R137, and R140. CTP is bound by residues R91, R137, and R140. The HD domain maps to 228-329; the sequence is TGVHALLALE…LKTLLALDGL (102 aa).

It belongs to the tRNA nucleotidyltransferase/poly(A) polymerase family. Bacterial CCA-adding enzyme type 1 subfamily. In terms of assembly, monomer. Can also form homodimers and oligomers. The cofactor is Mg(2+). Ni(2+) is required as a cofactor.

It carries out the reaction a tRNA precursor + 2 CTP + ATP = a tRNA with a 3' CCA end + 3 diphosphate. It catalyses the reaction a tRNA with a 3' CCA end + 2 CTP + ATP = a tRNA with a 3' CCACCA end + 3 diphosphate. Its function is as follows. Catalyzes the addition and repair of the essential 3'-terminal CCA sequence in tRNAs without using a nucleic acid template. Adds these three nucleotides in the order of C, C, and A to the tRNA nucleotide-73, using CTP and ATP as substrates and producing inorganic pyrophosphate. tRNA 3'-terminal CCA addition is required both for tRNA processing and repair. Also involved in tRNA surveillance by mediating tandem CCA addition to generate a CCACCA at the 3' terminus of unstable tRNAs. While stable tRNAs receive only 3'-terminal CCA, unstable tRNAs are marked with CCACCA and rapidly degraded. This is Multifunctional CCA protein from Teredinibacter turnerae (strain ATCC 39867 / T7901).